Reading from the N-terminus, the 126-residue chain is Fluoride-specific ion channel FluC (126 aa).

4 helical membrane passes run 4–24 (ILAIALGAAIGANLRYGIGLW), 35–55 (YGTFIINLLGCLGIGLLLTLI), 68–88 (MLVTGLLGGFTTFSTFGYESF), and 100–120 (IGYMVGSVVGGLIAVIIGVGL). Na(+) contacts are provided by Gly75 and Thr78.

It belongs to the fluoride channel Fluc/FEX (TC 1.A.43) family.

It localises to the cell membrane. The catalysed reaction is fluoride(in) = fluoride(out). With respect to regulation, na(+) is not transported, but it plays an essential structural role and its presence is essential for fluoride channel function. Functionally, fluoride-specific ion channel. Important for reducing fluoride concentration in the cell, thus reducing its toxicity. This chain is Fluoride-specific ion channel FluC, found in Chloroflexus aurantiacus (strain ATCC 29366 / DSM 635 / J-10-fl).